We begin with the raw amino-acid sequence, 433 residues long: Glutamate-1-semialdehyde 2,1-aminomutase (433 aa).

Position 271 is an N6-(pyridoxal phosphate)lysine (K271).

This sequence belongs to the class-III pyridoxal-phosphate-dependent aminotransferase family. HemL subfamily. As to quaternary structure, homodimer. Pyridoxal 5'-phosphate is required as a cofactor.

It is found in the cytoplasm. It catalyses the reaction (S)-4-amino-5-oxopentanoate = 5-aminolevulinate. It participates in porphyrin-containing compound metabolism; protoporphyrin-IX biosynthesis; 5-aminolevulinate from L-glutamyl-tRNA(Glu): step 2/2. Its pathway is porphyrin-containing compound metabolism; chlorophyll biosynthesis. This is Glutamate-1-semialdehyde 2,1-aminomutase from Prochlorococcus marinus (strain MIT 9215).